We begin with the raw amino-acid sequence, 578 residues long: Trehalase (578 aa).

Residues 1 to 19 form the signal peptide; it reads MPGSTWELHLLLLLGLGLG. A glycan (N-linked (GlcNAc...) asparagine) is linked at Asn78. Residues Arg168, 175-176, Asn212, and 221-223 contribute to the substrate site; these read WD and RSQ. Asn261 carries N-linked (GlcNAc...) asparagine glycosylation. Residues 286-288 and Gly319 contribute to the substrate site; that span reads RPE. The active-site Proton donor/acceptor is Asp321. Asn369 is a glycosylation site (N-linked (GlcNAc...) asparagine). Glu514 (proton donor/acceptor) is an active-site residue. Residue Glu528 participates in substrate binding. Ser555 is lipidated: GPI-anchor amidated serine. A propeptide spans 556-578 (removed in mature form); it reads GTQLALLEPHCLAAALLLSFLTR.

This sequence belongs to the glycosyl hydrolase 37 family. Homodimer; disulfide-linked. In terms of tissue distribution, expressed in small intestine, kidney, and to a lesser extent in liver.

The protein localises to the cell membrane. The catalysed reaction is alpha,alpha-trehalose + H2O = alpha-D-glucose + beta-D-glucose. Functionally, intestinal trehalase is probably involved in the hydrolysis of ingested trehalose. The polypeptide is Trehalase (TREH) (Oryctolagus cuniculus (Rabbit)).